Consider the following 115-residue polypeptide: Urease subunit beta (115 aa).

The protein belongs to the urease beta subunit family. As to quaternary structure, heterotrimer of UreA (gamma), UreB (beta) and UreC (alpha) subunits. Three heterotrimers associate to form the active enzyme.

It is found in the cytoplasm. The enzyme catalyses urea + 2 H2O + H(+) = hydrogencarbonate + 2 NH4(+). It functions in the pathway nitrogen metabolism; urea degradation; CO(2) and NH(3) from urea (urease route): step 1/1. In Arthrobacter sp. (strain FB24), this protein is Urease subunit beta.